The following is a 308-amino-acid chain: Phenylcoumaran benzylic ether reductase Pyrc5 (308 aa).

NADP(+)-binding positions include 11-17 (GGTGYIG), R36, and K45. K133 acts as the Proton acceptor in catalysis. Residue R137 coordinates NADP(+).

This sequence belongs to the NmrA-type oxidoreductase family. Isoflavone reductase subfamily.

The catalysed reaction is (-)-dehydrodiconiferyl alcohol + NADPH + H(+) = (S)-isodihydrodehydrodiconiferyl alcohol + NADP(+). It catalyses the reaction (+)-dehydrodiconiferyl alcohol + NADPH + H(+) = (R)-isodihydrodehydrodiconiferyl alcohol + NADP(+). Functionally, oxidoreductase involved in lignan biosynthesis. Catalyzes the NADPH-dependent reduction of phenylcoumaran benzylic ethers. Converts dehydrodiconiferyl alcohol (DDC) to isodihydrodehydrodiconiferyl alcohol (IDDDC). This is Phenylcoumaran benzylic ether reductase Pyrc5 from Pyrus communis (Pear).